The primary structure comprises 103 residues: MSQFDNVSVVKKANLYFDGKCVSHTVTFADGTRKTLGVIFPAALTFNTGAPEIMEINAGVCRVRLAGSDEWKTYGAGQQFDVPGNSSFDIEVTETLDYVCHFG.

This sequence belongs to the nucleoside phosphorylase PpnP family.

The catalysed reaction is a purine D-ribonucleoside + phosphate = a purine nucleobase + alpha-D-ribose 1-phosphate. The enzyme catalyses adenosine + phosphate = alpha-D-ribose 1-phosphate + adenine. It catalyses the reaction cytidine + phosphate = cytosine + alpha-D-ribose 1-phosphate. It carries out the reaction guanosine + phosphate = alpha-D-ribose 1-phosphate + guanine. The catalysed reaction is inosine + phosphate = alpha-D-ribose 1-phosphate + hypoxanthine. The enzyme catalyses thymidine + phosphate = 2-deoxy-alpha-D-ribose 1-phosphate + thymine. It catalyses the reaction uridine + phosphate = alpha-D-ribose 1-phosphate + uracil. It carries out the reaction xanthosine + phosphate = alpha-D-ribose 1-phosphate + xanthine. Catalyzes the phosphorolysis of diverse nucleosides, yielding D-ribose 1-phosphate and the respective free bases. Can use uridine, adenosine, guanosine, cytidine, thymidine, inosine and xanthosine as substrates. Also catalyzes the reverse reactions. This Cupriavidus metallidurans (strain ATCC 43123 / DSM 2839 / NBRC 102507 / CH34) (Ralstonia metallidurans) protein is Pyrimidine/purine nucleoside phosphorylase.